Consider the following 497-residue polypeptide: Histidine--tRNA ligase (497 aa).

The protein belongs to the class-II aminoacyl-tRNA synthetase family. In terms of assembly, homodimer.

Its subcellular location is the cytoplasm. It catalyses the reaction tRNA(His) + L-histidine + ATP = L-histidyl-tRNA(His) + AMP + diphosphate + H(+). The protein is Histidine--tRNA ligase of Dinoroseobacter shibae (strain DSM 16493 / NCIMB 14021 / DFL 12).